Consider the following 195-residue polypeptide: MGSRASTLLRDEELEEIKKETGFSHSQITRLYSRFTSLDKGENGTLSREDFQRIPELAINPLGDRIINAFFPEGEDQVNFRGFMRTLAHFRPIEDNEKSKDVNGPEPLNSRSNKLHFAFRLYDLDKDDKISRDELLQVLRMMVGVNISDEQLGSIADRTIQEADQDGDSAISFTEFVKVLEKVDVEQKMSIRFLH.

A lipid anchor (N-myristoyl glycine) is attached at glycine 2. The Necessary for association with microtubule and interaction with GAPDH signature appears at 2–6 (GSRAS). EF-hand domains lie at 26-61 (SQIT…AINP), 66-101 (IINA…KSKD), 110-145 (SRSN…MVGV), and 151-186 (QLGS…VDVE). Residues aspartate 123, aspartate 125, aspartate 127, lysine 129, and glutamate 134 each coordinate Ca(2+). A Nuclear export signal 1 motif is present at residues 138–147 (VLRMMVGVNI). Ca(2+) contacts are provided by aspartate 164, aspartate 166, aspartate 168, and glutamate 175. Positions 176–185 (FVKVLEKVDV) match the Nuclear export signal 2 motif.

This sequence belongs to the calcineurin regulatory subunit family. CHP subfamily. In terms of assembly, monomer. Interacts with STK17B; the interaction occurs in a calcium-independent manner and induces the translocation of CHP1 from the Golgi to the nucleus. Interacts with GAPDH; the interaction is direct, occurs in a N-myristoylation-dependent manner and facilitates the ability of CHP1 to bind microtubules. Interacts with KIF1B (via the C-terminal end of the kinesin-motor domain); the interaction occurs in a calcium-dependent manner. Associates (via C-terminal domain) with microtubules; the association occurs with polymerized microtubules during the cell cycle in a myristoylation- and calcium-independent manner and is enhanced by GAPDH. Interacts with PPP3CA. Interacts with SLC9A1/NHE1 (via the cytoplasmic C-terminal domain); the interaction occurs at the plasma membrane in a calcium-dependent manner and at a domain that is critical for growth factor stimulation of the exchanger. Interacts with SLC9A3; increases SLC9A3 trafficking and activity at the plasma membrane. Post-translationally, phosphorylated; decreased phosphorylation is associated with an increase in SLC9A1/NHE1 Na(+)/H(+) exchange activity. Phosphorylation occurs in serum-dependent manner. The phosphorylation state may regulate the binding to SLC9A1/NHE1. Both N-myristoylation and calcium-mediated conformational changes are essential for its function in exocytic traffic. N-myristoylation is required for its association with microtubules and interaction with GAPDH, but not for the constitutive association to membranes.

It is found in the nucleus. Its subcellular location is the cytoplasm. It localises to the cytoskeleton. The protein resides in the endomembrane system. The protein localises to the endoplasmic reticulum-Golgi intermediate compartment. It is found in the endoplasmic reticulum. Its subcellular location is the cell membrane. It localises to the membrane. Calcium-binding protein involved in different processes such as regulation of vesicular trafficking, plasma membrane Na(+)/H(+) exchanger and gene transcription. Involved in the constitutive exocytic membrane traffic. Mediates the association between microtubules and membrane-bound organelles of the endoplasmic reticulum and Golgi apparatus and is also required for the targeting and fusion of transcytotic vesicles (TCV) with the plasma membrane. Functions as an integral cofactor in cell pH regulation by controlling plasma membrane-type Na(+)/H(+) exchange activity. Affects the pH sensitivity of SLC9A1/NHE1 by increasing its sensitivity at acidic pH. Required for the stabilization and localization of SLC9A1/NHE1 at the plasma membrane. Inhibits serum- and GTPase-stimulated Na(+)/H(+) exchange. Plays a role as an inhibitor of ribosomal RNA transcription by repressing the nucleolar UBF1 transcriptional activity. May sequester UBF1 in the nucleoplasm and limit its translocation to the nucleolus. Associates to the ribosomal gene promoter. Acts as a negative regulator of the calcineurin/NFAT signaling pathway. Inhibits NFAT nuclear translocation and transcriptional activity by suppressing the calcium-dependent calcineurin phosphatase activity. Also negatively regulates the kinase activity of the apoptosis-induced kinase STK17B. Inhibits both STK17B auto- and substrate-phosphorylations in a calcium-dependent manner. This is Calcineurin B homologous protein 1 (CHP1) from Bos taurus (Bovine).